A 792-amino-acid polypeptide reads, in one-letter code: Molybdenum cofactor sulfurase (792 aa).

At Lys246 the chain carries N6-(pyridoxal phosphate)lysine. Cys414 is an active-site residue. One can recognise an MOSC domain in the interval 646 to 792; the sequence is LRLLRQSSQR…LTCGDVVVVT (147 aa). Position 748 is a phosphoserine (Ser748).

The protein belongs to the class-V pyridoxal-phosphate-dependent aminotransferase family. MOCOS subfamily. Pyridoxal 5'-phosphate serves as cofactor.

It carries out the reaction Mo-molybdopterin + L-cysteine + AH2 = thio-Mo-molybdopterin + L-alanine + A + H2O. The protein operates within cofactor biosynthesis; molybdopterin biosynthesis. Sulfurates the molybdenum cofactor. Sulfation of molybdenum is essential for xanthine dehydrogenase (XDH) and aldehyde oxidase (ADO) enzymes in which molybdenum cofactor is liganded by 1 oxygen and 1 sulfur atom in active form. The protein is Molybdenum cofactor sulfurase of Drosophila pseudoobscura pseudoobscura (Fruit fly).